A 327-amino-acid chain; its full sequence is Biotin synthase (327 aa).

Positions 49-282 (FNKEKIDLCS…KKVIRLCGGR (234 aa)) constitute a Radical SAM core domain. Positions 67, 71, and 74 each coordinate [4Fe-4S] cluster. Serine 110, cysteine 142, cysteine 201, and arginine 277 together coordinate [2Fe-2S] cluster.

Belongs to the radical SAM superfamily. Biotin synthase family. In terms of assembly, homodimer. Requires [4Fe-4S] cluster as cofactor. [2Fe-2S] cluster is required as a cofactor.

It carries out the reaction (4R,5S)-dethiobiotin + (sulfur carrier)-SH + 2 reduced [2Fe-2S]-[ferredoxin] + 2 S-adenosyl-L-methionine = (sulfur carrier)-H + biotin + 2 5'-deoxyadenosine + 2 L-methionine + 2 oxidized [2Fe-2S]-[ferredoxin]. It functions in the pathway cofactor biosynthesis; biotin biosynthesis; biotin from 7,8-diaminononanoate: step 2/2. Its function is as follows. Catalyzes the conversion of dethiobiotin (DTB) to biotin by the insertion of a sulfur atom into dethiobiotin via a radical-based mechanism. The protein is Biotin synthase of Methanococcus maripaludis (strain C7 / ATCC BAA-1331).